Reading from the N-terminus, the 335-residue chain is Holliday junction branch migration complex subunit RuvB (335 aa).

The interval 1-181 (MTRILDNDLI…FGITGHMEYY (181 aa)) is large ATPase domain (RuvB-L). ATP is bound by residues Leu-20, Arg-21, Gly-62, Lys-65, Thr-66, Thr-67, 128–130 (EDF), Arg-171, Tyr-181, and Arg-218. Thr-66 lines the Mg(2+) pocket. The small ATPAse domain (RuvB-S) stretch occupies residues 182 to 252 (QTADLTEIVE…ITDKALTMLD (71 aa)). A head domain (RuvB-H) region spans residues 255-335 (QEGLDYVDQK…GYPYEKTIKT (81 aa)). Positions 291, 310, 312, and 315 each coordinate DNA.

Belongs to the RuvB family. As to quaternary structure, homohexamer. Forms an RuvA(8)-RuvB(12)-Holliday junction (HJ) complex. HJ DNA is sandwiched between 2 RuvA tetramers; dsDNA enters through RuvA and exits via RuvB. An RuvB hexamer assembles on each DNA strand where it exits the tetramer. Each RuvB hexamer is contacted by two RuvA subunits (via domain III) on 2 adjacent RuvB subunits; this complex drives branch migration. In the full resolvosome a probable DNA-RuvA(4)-RuvB(12)-RuvC(2) complex forms which resolves the HJ.

It localises to the cytoplasm. It catalyses the reaction ATP + H2O = ADP + phosphate + H(+). Its function is as follows. The RuvA-RuvB-RuvC complex processes Holliday junction (HJ) DNA during genetic recombination and DNA repair, while the RuvA-RuvB complex plays an important role in the rescue of blocked DNA replication forks via replication fork reversal (RFR). RuvA specifically binds to HJ cruciform DNA, conferring on it an open structure. The RuvB hexamer acts as an ATP-dependent pump, pulling dsDNA into and through the RuvAB complex. RuvB forms 2 homohexamers on either side of HJ DNA bound by 1 or 2 RuvA tetramers; 4 subunits per hexamer contact DNA at a time. Coordinated motions by a converter formed by DNA-disengaged RuvB subunits stimulates ATP hydrolysis and nucleotide exchange. Immobilization of the converter enables RuvB to convert the ATP-contained energy into a lever motion, pulling 2 nucleotides of DNA out of the RuvA tetramer per ATP hydrolyzed, thus driving DNA branch migration. The RuvB motors rotate together with the DNA substrate, which together with the progressing nucleotide cycle form the mechanistic basis for DNA recombination by continuous HJ branch migration. Branch migration allows RuvC to scan DNA until it finds its consensus sequence, where it cleaves and resolves cruciform DNA. The sequence is that of Holliday junction branch migration complex subunit RuvB from Streptococcus equi subsp. equi (strain 4047).